A 208-amino-acid chain; its full sequence is FMN-dependent NADH:quinone oxidoreductase (208 aa).

FMN contacts are provided by residues 17-19 (SNS), 99-102 (MWNL), and 143-146 (SRGG).

The protein belongs to the azoreductase type 1 family. As to quaternary structure, homodimer. FMN serves as cofactor.

It carries out the reaction 2 a quinone + NADH + H(+) = 2 a 1,4-benzosemiquinone + NAD(+). The catalysed reaction is N,N-dimethyl-1,4-phenylenediamine + anthranilate + 2 NAD(+) = 2-(4-dimethylaminophenyl)diazenylbenzoate + 2 NADH + 2 H(+). Functionally, quinone reductase that provides resistance to thiol-specific stress caused by electrophilic quinones. Its function is as follows. Also exhibits azoreductase activity. Catalyzes the reductive cleavage of the azo bond in aromatic azo compounds to the corresponding amines. In Staphylococcus aureus (strain MSSA476), this protein is FMN-dependent NADH:quinone oxidoreductase.